The chain runs to 604 residues: Putative ankyrin repeat protein L56 (604 aa).

13 ANK repeats span residues 77–106 (IDRY…DILV), 135–164 (FFKS…NADG), 166–189 (LSAC…YDDN), 190–219 (TIYH…EDKR), 221–247 (NVFI…KWKI), 248–277 (DVEF…DSKY), 314–341 (KFSK…NENV), 342–371 (DLRE…EFTD), 380–410 (EHIT…SRSY), 445–474 (YSQA…DIKP), 475–504 (ITNI…DITI), 505–534 (NDNR…DIRT), and 535–565 (DDDY…EPSN).

This is Putative ankyrin repeat protein L56 from Acanthamoeba polyphaga (Amoeba).